The primary structure comprises 445 residues: Crotonyl-CoA reductase (445 aa).

Residue glutamate 149 coordinates Zn(2+).

Belongs to the zinc-containing alcohol dehydrogenase family. Crotonyl-CoA carboxylase/reductase subfamily. In terms of assembly, homodimer. Requires Zn(2+) as cofactor.

It catalyses the reaction butanoyl-CoA + NADP(+) = (2E)-butenoyl-CoA + NADPH + H(+). Its activity is regulated as follows. Inhibited by NADPH at concentrations above 200 uM, by MgCl (30%), by ZnCl(2) (55%), and by CoCl, MnCl and CaCl (100%). Also inhibited by iodoacetamide, N-ethylmaleamide, the thiol group inhibitor beta-chloromercuribenzoate, palmitoyl-CoA and myristoyl-CoA. Catalyzes the conversion of crotonyl-CoA to butyryl-CoA. It uses only NADP as electron donor. May have a role in providing butyryl-CoA as a starter unit for straight-chain fatty acid biosynthesis. The polypeptide is Crotonyl-CoA reductase (ccrA2) (Streptomyces avermitilis (strain ATCC 31267 / DSM 46492 / JCM 5070 / NBRC 14893 / NCIMB 12804 / NRRL 8165 / MA-4680)).